A 312-amino-acid polypeptide reads, in one-letter code: Zinc finger CCCH domain-containing protein 25 (312 aa).

The RRM domain occupies 36 to 114 (AYVFVGGIPY…RIVRVDHVSK (79 aa)). The segment at 130–157 (REARGVCYAFQKGECNRGASCRYSHDEQ) adopts a C3H1-type zinc-finger fold. The tract at residues 153 to 312 (SHDEQRNANT…DSERYRKSRR (160 aa)) is disordered. Composition is skewed to basic and acidic residues over residues 166–184 (SKEESKARWEHDRHHEPPM), 197–210 (RFPDRAKEENKSTG), and 219–312 (EAYK…KSRR).

This is Zinc finger CCCH domain-containing protein 25 from Oryza sativa subsp. japonica (Rice).